Consider the following 719-residue polypeptide: MRRASGVLRVLGGLTQRCSTSSTPSSSRFPAMNSRRKRNSVRKTATIEDIVEPRKVKHVTQTAAGMGEWIGSLDNTNIHMSLDEFMRRPMVRQLAKENGINDKLFMRSFKSFREYCTPEDLNSVDPGLLILLSDISKGTKDCEMLYPFFLDHAKQVFPHLEAMDDLRIISDLTRPHNWYPEARSVTRKIFFHAGPTNSGKTYHALKRFGEAKSAVFCGPLKLLAAEVFHRTNELGIPCDLVTGEERRFAKDNHHPSQHLSSTVEMLSTQMRVEVAVIDEIQMLRDEQRGWAWTRALLGAAADEIHLCGEPAAIDIVKKLLEPIGETVEVRYYERKSPLAIADKAIESYSNIEPGDCIVCFSKRSIFFNSKKLEENGIKPAVIYGDLPPGTKLAQAAKFNDPDDECNVLVATDAIGMGLNLNIRRVIFNSCTRQTELLPTYAALQIAGRAGRFGTAYANGVATTMRKEDLGTLKAILSEKIEPIANVGIAPTYDQIETFSFHLPQASFVRLLDLFVSVCSVSDHFFICTVYDMRELAVLIDQIPLPLKVRYTFCTSPLNTEDKRTSAVFVKMARRFSTGQALTYEWLIDMLEWPPKPATTLNELSLLEQNYEILDQYMWLSMRFPDMLPDEPRVREASKHLDSMIQEGVESFMSLLSVGATESKAAGSSKSSEGKRENPSKSEREKPNKRSSILEALLKRADISEDDLEQLREELNKNKK.

A mitochondrion-targeting transit peptide spans 1-18; sequence MRRASGVLRVLGGLTQRC. Residues 16 to 42 are disordered; that stretch reads QRCSTSSTPSSSRFPAMNSRRKRNSVR. One can recognise a Helicase ATP-binding domain in the interval 181–319; sequence EARSVTRKIF…PAAIDIVKKL (139 aa). Residue 194 to 201 participates in ATP binding; the sequence is GPTNSGKT. A Helicase C-terminal domain is found at 343–499; it reads KAIESYSNIE…PTYDQIETFS (157 aa). The tract at residues 662 to 692 is disordered; it reads SKAAGSSKSSEGKRENPSKSEREKPNKRSSI. Basic and acidic residues predominate over residues 671-687; it reads SEGKRENPSKSEREKPN. Positions 693 to 717 form a coiled coil; the sequence is LEALLKRADISEDDLEQLREELNKN.

Belongs to the helicase family. Requires Mg(2+) as cofactor. Mn(2+) is required as a cofactor.

The protein resides in the mitochondrion matrix. It is found in the nucleus. The catalysed reaction is ATP + H2O = ADP + phosphate + H(+). Its function is as follows. ATPase and DNA/RNA helicase able to unwind DNA/DNA, DNA/RNA and RNA/RNA duplexes in the 5'-3' direction. In Caenorhabditis elegans, this protein is ATP-dependent RNA helicase SUV3 homolog, mitochondrial.